A 251-amino-acid chain; its full sequence is Ubiquinone/menaquinone biosynthesis C-methyltransferase UbiE (251 aa).

S-adenosyl-L-methionine contacts are provided by residues threonine 74, aspartate 95, and 123 to 124; that span reads NA.

Belongs to the class I-like SAM-binding methyltransferase superfamily. MenG/UbiE family.

It carries out the reaction a 2-demethylmenaquinol + S-adenosyl-L-methionine = a menaquinol + S-adenosyl-L-homocysteine + H(+). The catalysed reaction is a 2-methoxy-6-(all-trans-polyprenyl)benzene-1,4-diol + S-adenosyl-L-methionine = a 5-methoxy-2-methyl-3-(all-trans-polyprenyl)benzene-1,4-diol + S-adenosyl-L-homocysteine + H(+). It participates in quinol/quinone metabolism; menaquinone biosynthesis; menaquinol from 1,4-dihydroxy-2-naphthoate: step 2/2. The protein operates within cofactor biosynthesis; ubiquinone biosynthesis. Its function is as follows. Methyltransferase required for the conversion of demethylmenaquinol (DMKH2) to menaquinol (MKH2) and the conversion of 2-polyprenyl-6-methoxy-1,4-benzoquinol (DDMQH2) to 2-polyprenyl-3-methyl-6-methoxy-1,4-benzoquinol (DMQH2). This chain is Ubiquinone/menaquinone biosynthesis C-methyltransferase UbiE, found in Shewanella pealeana (strain ATCC 700345 / ANG-SQ1).